A 78-amino-acid chain; its full sequence is uncharacterized protein (78 aa).

2 consecutive transmembrane segments (helical) span residues 12-32 and 51-71; these read LVSV…ICVV and GVGA…VAVH.

It is found in the cell membrane. This is an uncharacterized protein from Treponema pallidum (strain Nichols).